The following is a 106-amino-acid chain: Ig kappa-b4 chain C region (106 aa).

Positions 6-99 (PSVLLFPPSK…VQGSASPIVQ (94 aa)) constitute an Ig-like domain. Cysteines 27 and 87 form a disulfide. The segment covering 48–64 (QQSGIENSKTPQSPEDN) has biased composition (polar residues). A disordered region spans residues 48–67 (QQSGIENSKTPQSPEDNTYS).

In Oryctolagus cuniculus (Rabbit), this protein is Ig kappa-b4 chain C region (K-BAS).